A 399-amino-acid chain; its full sequence is MSMSKLDSLFTAALEQAAQRQVRRRLRRATAAPPGRLALDGRTLVNFSSNDYLGLARHPLLAERASLWATRHGAGAQASRLVCGNLDLHEQVEAKLARLKGTEAALLLASGWQANAAVLPALFKAAAAQGEPQVYTDRLNHASLHHGCQAAGVRQIRFRHNDLAHLEHLLAERAGAPGARFIVTESVFSMDGDRADVPALAALAARHHAFLYLDEAHATGVLGPRGMGLAGLAPGGVDLAMGTFSKGLGSFGAYVAGSRALCDYLVNACSGFIYTTALPPAVLGAIDAALDLVPRLDQARAALLGHGERLRASLAAQGIDCGASSTQIVPAIVGDAGHALALAAELERRGLLAVAIRPPTVPAGTSRLRIALSAAHGEAELDQLIEALAAGWRAVRQAA.

Substrate is bound at residue Arg24. 111 to 112 (GW) is a pyridoxal 5'-phosphate binding site. His141 lines the substrate pocket. Residues Ser189, 214-217 (DEAH), and 243-246 (TFSK) each bind pyridoxal 5'-phosphate. Lys246 is subject to N6-(pyridoxal phosphate)lysine. Substrate is bound at residue Thr360.

Belongs to the class-II pyridoxal-phosphate-dependent aminotransferase family. BioF subfamily. Homodimer. Pyridoxal 5'-phosphate serves as cofactor.

It carries out the reaction 6-carboxyhexanoyl-[ACP] + L-alanine + H(+) = (8S)-8-amino-7-oxononanoate + holo-[ACP] + CO2. The protein operates within cofactor biosynthesis; biotin biosynthesis. Catalyzes the decarboxylative condensation of pimeloyl-[acyl-carrier protein] and L-alanine to produce 8-amino-7-oxononanoate (AON), [acyl-carrier protein], and carbon dioxide. This chain is Putative 8-amino-7-oxononanoate synthase (bioF), found in Bordetella bronchiseptica (strain ATCC BAA-588 / NCTC 13252 / RB50) (Alcaligenes bronchisepticus).